We begin with the raw amino-acid sequence, 200 residues long: Imidazole glycerol phosphate synthase subunit HisH (200 aa).

Residues 3–200 (DVALIDAGGA…LRNFLEMSFP (198 aa)) form the Glutamine amidotransferase type-1 domain. The Nucleophile role is filled by Cys-78. Residues His-179 and Glu-181 contribute to the active site.

Heterodimer of HisH and HisF.

Its subcellular location is the cytoplasm. It catalyses the reaction 5-[(5-phospho-1-deoxy-D-ribulos-1-ylimino)methylamino]-1-(5-phospho-beta-D-ribosyl)imidazole-4-carboxamide + L-glutamine = D-erythro-1-(imidazol-4-yl)glycerol 3-phosphate + 5-amino-1-(5-phospho-beta-D-ribosyl)imidazole-4-carboxamide + L-glutamate + H(+). The catalysed reaction is L-glutamine + H2O = L-glutamate + NH4(+). Its pathway is amino-acid biosynthesis; L-histidine biosynthesis; L-histidine from 5-phospho-alpha-D-ribose 1-diphosphate: step 5/9. Its function is as follows. IGPS catalyzes the conversion of PRFAR and glutamine to IGP, AICAR and glutamate. The HisH subunit catalyzes the hydrolysis of glutamine to glutamate and ammonia as part of the synthesis of IGP and AICAR. The resulting ammonia molecule is channeled to the active site of HisF. This chain is Imidazole glycerol phosphate synthase subunit HisH, found in Xanthomonas axonopodis pv. citri (strain 306).